The primary structure comprises 55 residues: Protein CADMIUM TOLERANCE 1 (55 aa).

Residues 24 to 40 (GCLYACIFTALCCFCCY) traverse the membrane as a helical segment.

This sequence belongs to the CYSTM1 family.

The protein resides in the cell membrane. The protein localises to the secreted. It localises to the cell wall. Functionally, confers resistance to heavy metal ions (e.g. cadmium (CdCl(2)) and copper (CuCl(2))) by chelating them at the plasma membrane of root cells, thus stopping their entry and reducing their accumulation. In Echinochloa crus-galli subsp. caudata (Cockspur), this protein is Protein CADMIUM TOLERANCE 1.